The sequence spans 259 residues: Ribosomal RNA small subunit methyltransferase J (259 aa).

S-adenosyl-L-methionine is bound by residues 107–108 (RD), 123–124 (ER), 159–160 (SS), and D177.

The protein belongs to the methyltransferase superfamily. RsmJ family.

The protein resides in the cytoplasm. The enzyme catalyses guanosine(1516) in 16S rRNA + S-adenosyl-L-methionine = N(2)-methylguanosine(1516) in 16S rRNA + S-adenosyl-L-homocysteine + H(+). In terms of biological role, specifically methylates the guanosine in position 1516 of 16S rRNA. The chain is Ribosomal RNA small subunit methyltransferase J from Shewanella loihica (strain ATCC BAA-1088 / PV-4).